The primary structure comprises 331 residues: Biotin synthase (331 aa).

One can recognise a Radical SAM core domain in the interval 52 to 277 (PDVEVEGIIS…RTMLRFAGGR (226 aa)). Residues C67, C71, and C74 each contribute to the [4Fe-4S] cluster site. [2Fe-2S] cluster-binding residues include C110, C143, C202, and R272.

This sequence belongs to the radical SAM superfamily. Biotin synthase family. As to quaternary structure, homodimer. Requires [4Fe-4S] cluster as cofactor. [2Fe-2S] cluster serves as cofactor.

It carries out the reaction (4R,5S)-dethiobiotin + (sulfur carrier)-SH + 2 reduced [2Fe-2S]-[ferredoxin] + 2 S-adenosyl-L-methionine = (sulfur carrier)-H + biotin + 2 5'-deoxyadenosine + 2 L-methionine + 2 oxidized [2Fe-2S]-[ferredoxin]. The protein operates within cofactor biosynthesis; biotin biosynthesis; biotin from 7,8-diaminononanoate: step 2/2. Catalyzes the conversion of dethiobiotin (DTB) to biotin by the insertion of a sulfur atom into dethiobiotin via a radical-based mechanism. The sequence is that of Biotin synthase from Mycolicibacterium vanbaalenii (strain DSM 7251 / JCM 13017 / BCRC 16820 / KCTC 9966 / NRRL B-24157 / PYR-1) (Mycobacterium vanbaalenii).